A 268-amino-acid polypeptide reads, in one-letter code: Undecaprenyl-diphosphatase (268 aa).

Transmembrane regions (helical) follow at residues 5-25 (SIISALVLGLIEGLTEFIPVS), 43-63 (GNTFAVLIQLGAILAILLVYF), 84-104 (FSVLIAFLPAALIGAAAHGFI), 106-126 (AVLFETPMLICVVLIVGGVIL), 184-204 (AAEFSFFLAMPTMLGAFTLDL), 213-233 (FDDIGVIAIGFIAAFVAGIVV), and 248-268 (PFAIWRIVVGTAGLVGLWLVG).

This sequence belongs to the UppP family.

The protein resides in the cell inner membrane. It catalyses the reaction di-trans,octa-cis-undecaprenyl diphosphate + H2O = di-trans,octa-cis-undecaprenyl phosphate + phosphate + H(+). Its function is as follows. Catalyzes the dephosphorylation of undecaprenyl diphosphate (UPP). Confers resistance to bacitracin. The polypeptide is Undecaprenyl-diphosphatase (Sinorhizobium fredii (strain NBRC 101917 / NGR234)).